We begin with the raw amino-acid sequence, 167 residues long: Osteocalcin 2a (167 aa).

Residues 1–18 form the signal peptide; that stretch reads MKSLTLLTICAVLSVSLS. The propeptide occupies 19–118; it reads MNDLALDVVL…LASVLLRRKR (100 aa). The disordered stretch occupies residues 28–99; sequence LDPAPDPATE…TTEDPAAATE (72 aa). Residues 38–87 show a composition bias toward low complexity; that stretch reads PAPAADSSASSSASSSSSSASDSSASASDSSDSDSSSASSSSSSSESASA. Positions 131 to 163 constitute a Gla domain; it reads QVESLSEVCELNLACEHMAETAGIVAAYTAYYG. Residues Glu133, Glu137, and Glu140 each coordinate Ca(2+). 4-carboxyglutamate occurs at positions 133, 137, and 140. Residues Cys139 and Cys145 are joined by a disulfide bond.

The protein belongs to the osteocalcin/matrix Gla protein family. In terms of processing, gamma-carboxyglutamate residues are formed by vitamin K dependent carboxylation. These residues are essential for the binding of calcium.

It is found in the secreted. In terms of biological role, binds strongly to apatite and calcium. The sequence is that of Osteocalcin 2a from Oncorhynchus mykiss (Rainbow trout).